A 265-amino-acid chain; its full sequence is Methylthioribulose-1-phosphate dehydratase (265 aa).

C116 is a substrate binding site. Residues H134 and H136 each contribute to the Zn(2+) site. Catalysis depends on E159, which acts as the Proton donor/acceptor. H224 lines the Zn(2+) pocket.

It belongs to the aldolase class II family. MtnB subfamily. Zn(2+) is required as a cofactor.

The protein localises to the cytoplasm. The catalysed reaction is 5-(methylsulfanyl)-D-ribulose 1-phosphate = 5-methylsulfanyl-2,3-dioxopentyl phosphate + H2O. The protein operates within amino-acid biosynthesis; L-methionine biosynthesis via salvage pathway; L-methionine from S-methyl-5-thio-alpha-D-ribose 1-phosphate: step 2/6. In terms of biological role, catalyzes the dehydration of methylthioribulose-1-phosphate (MTRu-1-P) into 2,3-diketo-5-methylthiopentyl-1-phosphate (DK-MTP-1-P). The chain is Methylthioribulose-1-phosphate dehydratase from Debaryomyces hansenii (strain ATCC 36239 / CBS 767 / BCRC 21394 / JCM 1990 / NBRC 0083 / IGC 2968) (Yeast).